The sequence spans 177 residues: ATP-dependent protease subunit HslV (177 aa).

Thr2 is an active-site residue. The Na(+) site is built by Gly157, Cys160, and Thr163.

The protein belongs to the peptidase T1B family. HslV subfamily. In terms of assembly, a double ring-shaped homohexamer of HslV is capped on each side by a ring-shaped HslU homohexamer. The assembly of the HslU/HslV complex is dependent on binding of ATP.

The protein localises to the cytoplasm. The enzyme catalyses ATP-dependent cleavage of peptide bonds with broad specificity.. Its activity is regulated as follows. Allosterically activated by HslU binding. Protease subunit of a proteasome-like degradation complex believed to be a general protein degrading machinery. This chain is ATP-dependent protease subunit HslV, found in Aeromonas salmonicida (strain A449).